Consider the following 334-residue polypeptide: Tryptophan--tRNA ligase (334 aa).

ATP-binding positions include 11 to 13 (QPS) and 19 to 20 (GN). Residues 12 to 20 (PSGELTIGN) carry the 'HIGH' region motif. Aspartate 135 is a binding site for L-tryptophan. Residues 147–149 (GED), valine 186, and 195–199 (KMSKS) each bind ATP. Positions 195–199 (KMSKS) match the 'KMSKS' region motif.

The protein belongs to the class-I aminoacyl-tRNA synthetase family. As to quaternary structure, homodimer.

Its subcellular location is the cytoplasm. It carries out the reaction tRNA(Trp) + L-tryptophan + ATP = L-tryptophyl-tRNA(Trp) + AMP + diphosphate + H(+). Functionally, catalyzes the attachment of tryptophan to tRNA(Trp). In Escherichia coli O157:H7, this protein is Tryptophan--tRNA ligase.